Here is a 168-residue protein sequence, read N- to C-terminus: Large ribosomal subunit protein uL10 (168 aa).

Belongs to the universal ribosomal protein uL10 family. Part of the ribosomal stalk of the 50S ribosomal subunit. The N-terminus interacts with L11 and the large rRNA to form the base of the stalk. The C-terminus forms an elongated spine to which L12 dimers bind in a sequential fashion forming a multimeric L10(L12)X complex.

Its function is as follows. Forms part of the ribosomal stalk, playing a central role in the interaction of the ribosome with GTP-bound translation factors. The polypeptide is Large ribosomal subunit protein uL10 (Acinetobacter baumannii (strain AB307-0294)).